Reading from the N-terminus, the 180-residue chain is Large ribosomal subunit protein uL5c (180 aa).

This sequence belongs to the universal ribosomal protein uL5 family. In terms of assembly, part of the 50S ribosomal subunit; contacts the 5S rRNA.

It is found in the plastid. The protein localises to the chloroplast. Binds 5S rRNA, forms part of the central protuberance of the 50S subunit. In Oltmannsiellopsis viridis (Marine flagellate), this protein is Large ribosomal subunit protein uL5c (rpl5).